A 293-amino-acid polypeptide reads, in one-letter code: Glutamyl-Q tRNA(Asp) synthetase (293 aa).

L-glutamate-binding positions include 9 to 13 (RFAPS) and glutamate 45. The short motif at 12-22 (PSPSGELHFGS) is the 'HIGH' region element. The Zn(2+) site is built by cysteine 101, cysteine 103, tyrosine 115, and cysteine 119. The L-glutamate site is built by tyrosine 172 and arginine 190. Positions 228 to 232 (KLSKQ) match the 'KMSKS' region motif. Lysine 231 contacts ATP.

It belongs to the class-I aminoacyl-tRNA synthetase family. GluQ subfamily. Zn(2+) serves as cofactor.

Functionally, catalyzes the tRNA-independent activation of glutamate in presence of ATP and the subsequent transfer of glutamate onto a tRNA(Asp). Glutamate is transferred on the 2-amino-5-(4,5-dihydroxy-2-cyclopenten-1-yl) moiety of the queuosine in the wobble position of the QUC anticodon. The chain is Glutamyl-Q tRNA(Asp) synthetase from Klebsiella pneumoniae (strain 342).